A 118-amino-acid chain; its full sequence is NADPH-dependent 7-cyano-7-deazaguanine reductase (118 aa).

Cys34 serves as the catalytic Thioimide intermediate. Asp41 functions as the Proton donor in the catalytic mechanism. Substrate-binding positions include 56–58 (VEL) and 75–76 (HE).

It belongs to the GTP cyclohydrolase I family. QueF type 1 subfamily.

The protein localises to the cytoplasm. The enzyme catalyses 7-aminomethyl-7-carbaguanine + 2 NADP(+) = 7-cyano-7-deazaguanine + 2 NADPH + 3 H(+). The protein operates within tRNA modification; tRNA-queuosine biosynthesis. Catalyzes the NADPH-dependent reduction of 7-cyano-7-deazaguanine (preQ0) to 7-aminomethyl-7-deazaguanine (preQ1). The chain is NADPH-dependent 7-cyano-7-deazaguanine reductase from Halorhodospira halophila (strain DSM 244 / SL1) (Ectothiorhodospira halophila (strain DSM 244 / SL1)).